We begin with the raw amino-acid sequence, 326 residues long: Biotin synthase (326 aa).

Residues 48–277 (FGAGKVDLCS…SARIRMAGGR (230 aa)) enclose the Radical SAM core domain. Residues C66, C70, and C73 each coordinate [4Fe-4S] cluster. Residues S110, C142, C202, and R272 each contribute to the [2Fe-2S] cluster site.

Belongs to the radical SAM superfamily. Biotin synthase family. In terms of assembly, homodimer. The cofactor is [4Fe-4S] cluster. It depends on [2Fe-2S] cluster as a cofactor.

The catalysed reaction is (4R,5S)-dethiobiotin + (sulfur carrier)-SH + 2 reduced [2Fe-2S]-[ferredoxin] + 2 S-adenosyl-L-methionine = (sulfur carrier)-H + biotin + 2 5'-deoxyadenosine + 2 L-methionine + 2 oxidized [2Fe-2S]-[ferredoxin]. It participates in cofactor biosynthesis; biotin biosynthesis; biotin from 7,8-diaminononanoate: step 2/2. Its function is as follows. Catalyzes the conversion of dethiobiotin (DTB) to biotin by the insertion of a sulfur atom into dethiobiotin via a radical-based mechanism. In Heliobacterium modesticaldum (strain ATCC 51547 / Ice1), this protein is Biotin synthase.